We begin with the raw amino-acid sequence, 120 residues long: Putative 15 kDa capsid protein (120 aa).

Its subcellular location is the virion. This Orgyia pseudotsugata (Douglas-fir tussock moth) protein is Putative 15 kDa capsid protein (P15).